The chain runs to 475 residues: Ribulose bisphosphate carboxylase large chain (475 aa).

Positions 1–2 are excised as a propeptide; the sequence is MS. Pro-3 bears the N-acetylproline mark. Lys-14 carries the post-translational modification N6,N6,N6-trimethyllysine. Residues Asn-123 and Thr-173 each coordinate substrate. Catalysis depends on Lys-175, which acts as the Proton acceptor. Lys-177 provides a ligand contact to substrate. 3 residues coordinate Mg(2+): Lys-201, Asp-203, and Glu-204. Lys-201 carries the N6-carboxylysine modification. Residue His-294 is the Proton acceptor of the active site. The substrate site is built by Arg-295, His-327, and Ser-379.

The protein belongs to the RuBisCO large chain family. Type I subfamily. As to quaternary structure, heterohexadecamer of 8 large chains and 8 small chains; disulfide-linked. The disulfide link is formed within the large subunit homodimers. Mg(2+) serves as cofactor. The disulfide bond which can form in the large chain dimeric partners within the hexadecamer appears to be associated with oxidative stress and protein turnover.

The protein localises to the plastid. Its subcellular location is the chloroplast. The enzyme catalyses 2 (2R)-3-phosphoglycerate + 2 H(+) = D-ribulose 1,5-bisphosphate + CO2 + H2O. The catalysed reaction is D-ribulose 1,5-bisphosphate + O2 = 2-phosphoglycolate + (2R)-3-phosphoglycerate + 2 H(+). Functionally, ruBisCO catalyzes two reactions: the carboxylation of D-ribulose 1,5-bisphosphate, the primary event in carbon dioxide fixation, as well as the oxidative fragmentation of the pentose substrate in the photorespiration process. Both reactions occur simultaneously and in competition at the same active site. This chain is Ribulose bisphosphate carboxylase large chain, found in Cedrus deodara (Deodar cedar).